A 330-amino-acid chain; its full sequence is (4-{4-[2-(gamma-L-glutamylamino)ethyl]phenoxymethyl}furan-2-yl)methanamine synthase (330 aa).

Belongs to the MfnF family.

The catalysed reaction is gamma-L-glutamyltyramine + [5-(aminomethyl)furan-3-yl]methyl diphosphate = (4-{4-[2-(gamma-L-glutamylamino)ethyl]phenoxymethyl}furan-2-yl)methanamine + diphosphate. It functions in the pathway cofactor biosynthesis; methanofuran biosynthesis. Catalyzes the condensation between 5-(aminomethyl)-3-furanmethanol diphosphate (F1-PP) and gamma-glutamyltyramine to produce APMF-Glu. The protein is (4-{4-[2-(gamma-L-glutamylamino)ethyl]phenoxymethyl}furan-2-yl)methanamine synthase of Methanocaldococcus jannaschii (strain ATCC 43067 / DSM 2661 / JAL-1 / JCM 10045 / NBRC 100440) (Methanococcus jannaschii).